The chain runs to 185 residues: Large ribosomal subunit protein uL10 (185 aa).

Positions 165 to 185 (LRAKKEEQGGAGTPAPAEAAE) are disordered.

Belongs to the universal ribosomal protein uL10 family. In terms of assembly, part of the ribosomal stalk of the 50S ribosomal subunit. The N-terminus interacts with L11 and the large rRNA to form the base of the stalk. The C-terminus forms an elongated spine to which L12 dimers bind in a sequential fashion forming a multimeric L10(L12)X complex.

Functionally, forms part of the ribosomal stalk, playing a central role in the interaction of the ribosome with GTP-bound translation factors. The protein is Large ribosomal subunit protein uL10 of Streptomyces griseus subsp. griseus (strain JCM 4626 / CBS 651.72 / NBRC 13350 / KCC S-0626 / ISP 5235).